The following is a 491-amino-acid chain: Trypanothione reductase (491 aa).

Residue 35–51 (DLQKHHGPPHYAALGGT) participates in FAD binding. A disulfide bridge connects residues C52 and C57. The active-site Proton acceptor is the H461.

Belongs to the class-I pyridine nucleotide-disulfide oxidoreductase family. Homodimer. It depends on FAD as a cofactor. Post-translationally, the N-terminus is blocked.

The protein localises to the cytoplasm. It carries out the reaction trypanothione + NADP(+) = trypanothione disulfide + NADPH + H(+). Functionally, trypanothione is the parasite analog of glutathione; this enzyme is the equivalent of glutathione reductase. The sequence is that of Trypanothione reductase (TPR) from Crithidia fasciculata.